The following is a 279-amino-acid chain: MSNAPYDPATEGARMNFKGRMSYGDYLMLDRLLDAQAPLSSAHDELLFIIQHQTSELWMKLAIHEIKAAMAAIAKDDVQPAFKMLARVSRIFEQLNGAWDVLRTMTPSEYTLFRDKLGESSGFQSFQYRSIEFLLGNRNLAMLRPHAHHPELTAELEAILAKPSLYDEALKLLARRGFFIGADGQRTDWRGTRSESPEVAAAWTSVYRDPQRHWELYELAEKLVDFEDYFRRWRFNHVTTVERIIGFKTGTGGTSGVNYLRKMLEIVLFPELWKLRTGL.

Residues 48–52, tyrosine 110, and arginine 114 each bind substrate; that span reads FIIQH. Histidine 237 contacts heme. Threonine 251 contacts substrate.

This sequence belongs to the tryptophan 2,3-dioxygenase family. In terms of assembly, homotetramer. The cofactor is heme.

It catalyses the reaction L-tryptophan + O2 = N-formyl-L-kynurenine. Its pathway is amino-acid degradation; L-tryptophan degradation via kynurenine pathway; L-kynurenine from L-tryptophan: step 1/2. Heme-dependent dioxygenase that catalyzes the oxidative cleavage of the L-tryptophan (L-Trp) pyrrole ring and converts L-tryptophan to N-formyl-L-kynurenine. Catalyzes the oxidative cleavage of the indole moiety. The protein is Tryptophan 2,3-dioxygenase of Bradyrhizobium sp. (strain BTAi1 / ATCC BAA-1182).